The chain runs to 336 residues: Aspartate--ammonia ligase (336 aa).

Belongs to the class-II aminoacyl-tRNA synthetase family. AsnA subfamily.

Its subcellular location is the cytoplasm. It carries out the reaction L-aspartate + NH4(+) + ATP = L-asparagine + AMP + diphosphate + H(+). It functions in the pathway amino-acid biosynthesis; L-asparagine biosynthesis; L-asparagine from L-aspartate (ammonia route): step 1/1. In Limosilactobacillus reuteri (strain DSM 20016) (Lactobacillus reuteri), this protein is Aspartate--ammonia ligase.